The sequence spans 358 residues: NADH-quinone oxidoreductase subunit H (358 aa).

8 helical membrane-spanning segments follow: residues 20–40 (ITVGLVVSVIVKIVIILIPLI), 95–115 (ALFYIGPIMSLAPSFAAWAVI), 128–148 (IGLLYILMITSLSVYGVIIAG), 168–188 (ISYEIAMSAALVCVVMVSGSM), 206–226 (VFSWNWLPLFPIFIVYLISAV), 253–273 (GFAFALFFLAEYIFMILIAAL), 295–315 (TPSAFWMFAKMAAVLYWYLWI), and 334–354 (VLIPIGFAYIVILGVWMISPL).

Belongs to the complex I subunit 1 family. In terms of assembly, NDH-1 is composed of 14 different subunits. Subunits NuoA, H, J, K, L, M, N constitute the membrane sector of the complex.

It localises to the cell inner membrane. The enzyme catalyses a quinone + NADH + 5 H(+)(in) = a quinol + NAD(+) + 4 H(+)(out). In terms of biological role, NDH-1 shuttles electrons from NADH, via FMN and iron-sulfur (Fe-S) centers, to quinones in the respiratory chain. The immediate electron acceptor for the enzyme in this species is believed to be ubiquinone. Couples the redox reaction to proton translocation (for every two electrons transferred, four hydrogen ions are translocated across the cytoplasmic membrane), and thus conserves the redox energy in a proton gradient. This subunit may bind ubiquinone. The protein is NADH-quinone oxidoreductase subunit H of Neisseria meningitidis serogroup B (strain ATCC BAA-335 / MC58).